The chain runs to 448 residues: Homogentisate 1,2-dioxygenase (448 aa).

The active-site Proton acceptor is the His-302. 2 residues coordinate Fe cation: His-345 and Glu-351. Residues Tyr-360 and His-381 each contribute to the homogentisate site. His-381 lines the Fe cation pocket.

The protein belongs to the homogentisate dioxygenase family. In terms of assembly, hexamer; dimer of trimers. Fe cation is required as a cofactor.

The catalysed reaction is homogentisate + O2 = 4-maleylacetoacetate + H(+). It participates in amino-acid degradation; L-phenylalanine degradation; acetoacetate and fumarate from L-phenylalanine: step 4/6. In terms of biological role, involved in the catabolism of homogentisate (2,5-dihydroxyphenylacetate or 2,5-OH-PhAc), a central intermediate in the degradation of phenylalanine and tyrosine. Catalyzes the oxidative ring cleavage of the aromatic ring of homogentisate to yield maleylacetoacetate. The protein is Homogentisate 1,2-dioxygenase of Ralstonia pickettii (strain 12J).